The sequence spans 201 residues: Putative toxin HigB2 (201 aa).

It belongs to the mycobacterial HigB family.

Its function is as follows. Putative toxic component of a type II toxin-antitoxin (TA) system. Its cognate antitoxin would be HigA2. The protein is Putative toxin HigB2 of Mycobacterium tuberculosis (strain ATCC 25618 / H37Rv).